We begin with the raw amino-acid sequence, 127 residues long: Small ribosomal subunit protein eS8 (127 aa).

A disordered region spans residues 1–31 (MTIFQGKSGKKATGGSLKQSRKKRRFELGRE).

This sequence belongs to the eukaryotic ribosomal protein eS8 family. Part of the 30S ribosomal subunit.

This Thermoplasma acidophilum (strain ATCC 25905 / DSM 1728 / JCM 9062 / NBRC 15155 / AMRC-C165) protein is Small ribosomal subunit protein eS8 (rps8e).